Reading from the N-terminus, the 170-residue chain is Protein FAM209 (170 aa).

Positions 1–20 are cleaved as a signal peptide; sequence MRTLLRWCLFLSLCVSCACA. The helical transmembrane segment at 56–76 threads the bilayer; sequence WLGNKWLWLFVAIMIYVMLKF. The disordered stretch occupies residues 83–107; that stretch reads KEQHPPGLRGCQLRSPPKKAQNISP.

In terms of assembly, interacts with DPY19L2. Interacts with CYLC1; the interaction may be relevant for proper acrosome attachment to the nuclear envelope. Predominately expressed in testis.

It is found in the nucleus inner membrane. In terms of biological role, required for sperm acrosome biogenesis. The protein is Protein FAM209 of Mus musculus (Mouse).